Consider the following 176-residue polypeptide: Ribosome maturation factor RimM (176 aa).

Positions 99–176 (EDEYYWSDLV…RMVVDWERDF (78 aa)) constitute a PRC barrel domain.

This sequence belongs to the RimM family. Binds ribosomal protein uS19.

It localises to the cytoplasm. Its function is as follows. An accessory protein needed during the final step in the assembly of 30S ribosomal subunit, possibly for assembly of the head region. Essential for efficient processing of 16S rRNA. May be needed both before and after RbfA during the maturation of 16S rRNA. It has affinity for free ribosomal 30S subunits but not for 70S ribosomes. The polypeptide is Ribosome maturation factor RimM (Psychrobacter sp. (strain PRwf-1)).